A 285-amino-acid chain; its full sequence is MSDVEEAVEEYEEQEEAAEEEHEEAVEEEAGGEAEAGEPCTAEDGEEEEGREAEDGPVEEFKPKPRPFMPNLVPPKIPDGERVDFDDIHRKRMEKDLNELQTLIEAHFENRKKEEEELVSLKDRIEKRRAERAEQQRIRAEREKERQTRLAEERARREEEESRRKAEDEARKKKALSNMMHFGGYIQKAQTERKSGKRQTEREKKKKILAERRKVLAIDHLNEDQLREKAKELWQMIYDLEAEKFDLQEKFKQQKYEINVLRNRINDNQKVSKTRGKAKVTGRWK.

The segment covering Met1–Val58 has biased composition (acidic residues). 2 disordered regions span residues Met1–Val83 and Arg111–Lys206. N-acetylserine is present on Ser2. Ser2 bears the Phosphoserine; by CK2 mark. Over residues Arg66–Ile77 the composition is skewed to pro residues. 2 stretches are compositionally biased toward basic and acidic residues: residues Arg111 to Arg171 and Gln190 to Lys206. Phosphothreonine; by PKC/PRKCA is present on Thr191. Ser195 bears the Phosphoserine; by PKC/PRKCA mark. Thr200 carries the post-translational modification Phosphothreonine; by PKC/PRKCA and RAF1. Thr281 carries the post-translational modification Phosphothreonine; by PKC/PRKCA.

The protein belongs to the troponin T family. In terms of processing, the N-terminus is blocked. Post-translationally, phosphorylation at Thr-200 by PRKCA induces significant reduction in myofilament calcium sensitivity and actomyosin ATPase activity.

Its function is as follows. Troponin T is the tropomyosin-binding subunit of troponin, the thin filament regulatory complex which confers calcium-sensitivity to striated muscle actomyosin ATPase activity. The protein is Troponin T, cardiac muscle (TNNT2) of Bos taurus (Bovine).